The chain runs to 236 residues: MALVPYEETTEFGLQKFHKPLKTFSFANHTIQIRQDWRHLGVAAVVWDAAIVLSTYLEMGAVELRGRSAVELGAGTGLVGIVAALLALKSSMKPLLVHCLLFFSGAHVTITDRKVALEFLKSNVQANLPPHIQPKTVVKELTWGQNLGSFSPGEFDLILGADIIYLEETFTDLLQTLEHLCSNHSVILLACRIRYERDNNFLAMLERQFTVRKVHYDPEKDVHIYEAQKRNQKEDL.

Residues W47, 73–75 (GAG), D112, W143, and A161 each bind S-adenosyl-L-methionine.

This sequence belongs to the methyltransferase superfamily. METTL21 family. Interacts with heat shock 70 family members; at least some of these proteins are methylation substrates.

The protein resides in the cytoplasm. It carries out the reaction L-lysyl-[protein] + 3 S-adenosyl-L-methionine = N(6),N(6),N(6)-trimethyl-L-lysyl-[protein] + 3 S-adenosyl-L-homocysteine + 3 H(+). Its function is as follows. Protein-lysine methyltransferase that selectively trimethylates residues in heat shock protein 70 (HSP70) family members. Contributes to the in vivo trimethylation of Lys residues in HSPA1 and HSPA8. In vitro methylates 'Lys-561' in HSPA1, 'Lys-564' in HSPA2, 'Lys-585' in HSPA5, 'Lys-563' in HSPA6 and 'Lys-561' in HSPA8. The polypeptide is Protein N-lysine methyltransferase METTL21A (METTL21A) (Pongo abelii (Sumatran orangutan)).